Consider the following 427-residue polypeptide: Serine/threonine-protein kinase ssn3 (427 aa).

Residues 40–369 (YHIVGFISSG…AQEALEHPYF (330 aa)) form the Protein kinase domain. Residues 46–54 (ISSGTYGRV) and lysine 70 contribute to the ATP site. Aspartate 172 serves as the catalytic Proton acceptor. The segment covering 390-399 (RRVTQDDNDI) has biased composition (basic and acidic residues). The disordered stretch occupies residues 390–427 (RRVTQDDNDIRSGSLPGTKRSGLPDDSLLGRATKRLKE).

This sequence belongs to the protein kinase superfamily. CMGC Ser/Thr protein kinase family. CDC2/CDKX subfamily. As to quaternary structure, component of the srb8-11 complex, a regulatory module of the Mediator complex. Requires Mg(2+) as cofactor.

It localises to the nucleus. The catalysed reaction is L-seryl-[protein] + ATP = O-phospho-L-seryl-[protein] + ADP + H(+). The enzyme catalyses L-threonyl-[protein] + ATP = O-phospho-L-threonyl-[protein] + ADP + H(+). It catalyses the reaction [DNA-directed RNA polymerase] + ATP = phospho-[DNA-directed RNA polymerase] + ADP + H(+). Its function is as follows. Component of the srb8-11 complex. The srb8-11 complex is a regulatory module of the Mediator complex which is itself involved in regulation of basal and activated RNA polymerase II-dependent transcription. The srb8-11 complex may be involved in the transcriptional repression of a subset of genes regulated by Mediator. It may inhibit the association of the Mediator complex with RNA polymerase II to form the holoenzyme complex. The srb8-11 complex phosphorylates the C-terminal domain (CTD) of the largest subunit of RNA polymerase II. In Aspergillus niger (strain ATCC MYA-4892 / CBS 513.88 / FGSC A1513), this protein is Serine/threonine-protein kinase ssn3 (ssn3).